Reading from the N-terminus, the 173-residue chain is Large ribosomal subunit protein uL10 (173 aa).

It belongs to the universal ribosomal protein uL10 family. As to quaternary structure, part of the ribosomal stalk of the 50S ribosomal subunit. The N-terminus interacts with L11 and the large rRNA to form the base of the stalk. The C-terminus forms an elongated spine to which L12 dimers bind in a sequential fashion forming a multimeric L10(L12)X complex.

Forms part of the ribosomal stalk, playing a central role in the interaction of the ribosome with GTP-bound translation factors. In Thermus thermophilus (strain ATCC BAA-163 / DSM 7039 / HB27), this protein is Large ribosomal subunit protein uL10.